The following is a 607-amino-acid chain: Zinc finger CCCH domain-containing protein 66 (607 aa).

2 ANK repeats span residues 57 to 87 (EERT…DVNR) and 92 to 124 (DGAT…NPDS). Over residues 161–178 (LNEVNGQEESEPEVEVEV) the composition is skewed to acidic residues. Residues 161–193 (LNEVNGQEESEPEVEVEVEVSPPRGSERKEYPV) are disordered. C3H1-type zinc fingers lie at residues 254-276 (PCPE…HGIF) and 284-308 (QYRT…HKPE). The segment at 342–363 (ISPLPIGATTTPPLSPNGVSSP) is disordered. Positions 349–361 (ATTTPPLSPNGVS) are enriched in polar residues.

The sequence is that of Zinc finger CCCH domain-containing protein 66 from Arabidopsis thaliana (Mouse-ear cress).